A 773-amino-acid chain; its full sequence is Histone-lysine N-methyltransferase mes-2 (773 aa).

A compositionally biased stretch (polar residues) spans 1–13 (MSNSEPSTSTPSG). The interval 1 to 33 (MSNSEPSTSTPSGKTKKRGKKCETSMGKSKKSK) is disordered. The interaction with mes-6 stretch occupies residues 1–194 (MSNSEPSTST…TPDQLRLTHM (194 aa)). Residues 505-614 (IREDDMRDSQ…SNIIKCRNFG (110 aa)) form the CXC domain. The SET domain occupies 616–737 (TRMIQKRTYC…ISEELTFDYS (122 aa)). The segment at 749–773 (VQTKERSEKPSRPKSQKLSKPMTSE) is disordered. Positions 750–759 (QTKERSEKPS) are enriched in basic and acidic residues.

Belongs to the class V-like SAM-binding methyltransferase superfamily. Histone-lysine methyltransferase family. EZ subfamily. In terms of assembly, interacts directly with mes-6 via its N-terminal domain. Forms a heterotrimeric complex with mes-3 and mes-6. Does not interact with mes-4. As to expression, in adults, it is predominantly expressed in the germline, and weakly expressed in intestinal cells. Expressed in the hypoderm.

The protein resides in the nucleus. It catalyses the reaction L-lysyl(27)-[histone H3] + 3 S-adenosyl-L-methionine = N(6),N(6),N(6)-trimethyl-L-lysyl(27)-[histone H3] + 3 S-adenosyl-L-homocysteine + 3 H(+). Functionally, polycomb group (PcG) protein. Catalytic subunit of a the mes-2/mes-3/mes-6 complex, which methylates 'Lys-27' of histone H3, leading to transcriptional repression of the affected target genes. PcG proteins act by forming multiprotein complexes, which are required to maintain the transcriptionally repressive state of homeotic genes throughout development. In association with the nfya-1-NF-Y complex, may play a role in repressing the expression of the homeobox protein egl-5 in tissues such as the head. PcG proteins are not required to initiate repression, but to maintain it during later stages of development. The mes-2/mes-3/mes-6 complex may participate in the global inactivation of the X chromosomes in germline cells. This complex is required to exclude mes-4 from the inactivated X-chromosomes in germline cells. Required for small-RNA-induced H3K27 trimethylation. Involved in the negative regulation of lifespan in a germline-independent fashion. The polypeptide is Histone-lysine N-methyltransferase mes-2 (Caenorhabditis elegans).